The chain runs to 535 residues: Peptide chain release factor 3 (535 aa).

The 271-residue stretch at 8–278 folds into the tr-type G domain; that stretch reads ARRRTFAIIS…VDQAPAPGPR (271 aa). Residues 17–24, 85–89, and 139–142 contribute to the GTP site; these read SHPDAGKT, DTPGH, and NKLD.

It belongs to the TRAFAC class translation factor GTPase superfamily. Classic translation factor GTPase family. PrfC subfamily.

The protein localises to the cytoplasm. Increases the formation of ribosomal termination complexes and stimulates activities of RF-1 and RF-2. It binds guanine nucleotides and has strong preference for UGA stop codons. It may interact directly with the ribosome. The stimulation of RF-1 and RF-2 is significantly reduced by GTP and GDP, but not by GMP. The chain is Peptide chain release factor 3 from Bordetella bronchiseptica (strain ATCC BAA-588 / NCTC 13252 / RB50) (Alcaligenes bronchisepticus).